The chain runs to 273 residues: Phosphate import ATP-binding protein PstB (273 aa).

In terms of domain architecture, ABC transporter spans 19 to 258 (ISIQNVTISY…FNETEKIFNS (240 aa)). 51 to 58 (GPSGCGKS) contacts ATP.

The protein belongs to the ABC transporter superfamily. Phosphate importer (TC 3.A.1.7) family. In terms of assembly, the complex is composed of two ATP-binding proteins (PstB), two transmembrane proteins (PstC and PstA) and a solute-binding protein (PstS).

It is found in the cell inner membrane. The enzyme catalyses phosphate(out) + ATP + H2O = ADP + 2 phosphate(in) + H(+). Its function is as follows. Part of the ABC transporter complex PstSACB involved in phosphate import. Responsible for energy coupling to the transport system. This Parasynechococcus marenigrum (strain WH8102) protein is Phosphate import ATP-binding protein PstB.